The following is a 265-amino-acid chain: MTKKPENPGSAGIRVLKTRIKKKSGLKESSRRWLQRHINDPYVQRSKADGYRSRAAYKLIEIDDKHHLLKPGMKVIDLGAAPGGWCQVAAARTKSTAENPHVVGIDYLEMDAVPGAPVLLMDFLDPDAPQKLAEALGGNPDVVLSDMAAPTTGHKRTDHIRTMHLCEVAADFALSVLKPGGHFLAKTFQGGAENELLSMLKKNFRSVHHVKPPASRDESVELYLLAKDFKGREAGPPSGGSERPVDVSKDLSARSDSEGPGDAEG.

S-adenosyl-L-methionine is bound by residues G83, W85, D106, D122, and D146. K186 (proton acceptor) is an active-site residue. Residues 230-265 (KGREAGPPSGGSERPVDVSKDLSARSDSEGPGDAEG) are disordered. The span at 243–257 (RPVDVSKDLSARSDS) shows a compositional bias: basic and acidic residues.

The protein belongs to the class I-like SAM-binding methyltransferase superfamily. RNA methyltransferase RlmE family.

The protein localises to the cytoplasm. The catalysed reaction is uridine(2552) in 23S rRNA + S-adenosyl-L-methionine = 2'-O-methyluridine(2552) in 23S rRNA + S-adenosyl-L-homocysteine + H(+). Specifically methylates the uridine in position 2552 of 23S rRNA at the 2'-O position of the ribose in the fully assembled 50S ribosomal subunit. This Mesorhizobium japonicum (strain LMG 29417 / CECT 9101 / MAFF 303099) (Mesorhizobium loti (strain MAFF 303099)) protein is Ribosomal RNA large subunit methyltransferase E.